The following is a 329-amino-acid chain: MLGSVTDFLKPRLVDIEQVSPTHAKVTLEPLERGFGHTLGNALRRILLSSMPGCAVTEVEIDGVLHEYSSKEGVQEDILEILLNLKGIAVKLEGKDEVTLSLTKSGTGPVTAGDITHGDEVEIVNPEHVICHLTGANAEISMRLKVQRGRGYVPASARVHNDDEERPIGRLLLDSAFSPIVRIAYNVEAARVEQRTDLDKLVIDMETNGTLDPEEAIRRSATILAEQLEAFVDLRDVSVPEKKEEKPEFDPILLRPVDDLELTVRSANCLKAEAIHYIGDLVQRTEVELLKTPNLGKKSLTEIKDVLASRGLSLGMRLENWPPASIADE.

Residues methionine 1 to arginine 235 form an alpha N-terminal domain (alpha-NTD) region. The tract at residues phenylalanine 249–glutamate 329 is alpha C-terminal domain (alpha-CTD).

The protein belongs to the RNA polymerase alpha chain family. Homodimer. The RNAP catalytic core consists of 2 alpha, 1 beta, 1 beta' and 1 omega subunit. When a sigma factor is associated with the core the holoenzyme is formed, which can initiate transcription.

It carries out the reaction RNA(n) + a ribonucleoside 5'-triphosphate = RNA(n+1) + diphosphate. Functionally, DNA-dependent RNA polymerase catalyzes the transcription of DNA into RNA using the four ribonucleoside triphosphates as substrates. This chain is DNA-directed RNA polymerase subunit alpha, found in Aeromonas hydrophila subsp. hydrophila (strain ATCC 7966 / DSM 30187 / BCRC 13018 / CCUG 14551 / JCM 1027 / KCTC 2358 / NCIMB 9240 / NCTC 8049).